The chain runs to 397 residues: Ribosomal RNA large subunit methyltransferase I (397 aa).

A PUA domain is found at 2–80 (SAAIYLVKGR…QDVNRAFFVK (79 aa)).

It belongs to the methyltransferase superfamily. RlmI family.

The protein resides in the cytoplasm. The enzyme catalyses cytidine(1962) in 23S rRNA + S-adenosyl-L-methionine = 5-methylcytidine(1962) in 23S rRNA + S-adenosyl-L-homocysteine + H(+). Its function is as follows. Specifically methylates the cytosine at position 1962 (m5C1962) of 23S rRNA. The protein is Ribosomal RNA large subunit methyltransferase I of Vibrio vulnificus (strain YJ016).